The primary structure comprises 910 residues: Adhesion G-protein coupled receptor F1 (910 aa).

Residues 1-19 (MKVGVLWLISFFTFTDGHG) form the signal peptide. Topologically, residues 20 to 583 (GFLGKNDGIK…SPFVPSTIFP (564 aa)) are extracellular. N-linked (GlcNAc...) asparagine glycosylation is found at Asn139, Asn168, Asn205, Asn282, Asn310, Asn317, Asn329, Asn354, Asn368, Asn389, Asn410, Asn423, Asn437, Asn455, Asn512, Asn528, and Asn553. Positions 148–256 (ERTKIWGTFK…GSFRVFGKAQ (109 aa)) constitute an SEA domain. 2 disulfides stabilise this stretch: Cys257/Cys287 and Cys275/Cys299. One can recognise a GAIN-B domain in the interval 437–579 (NKSQLKRGYS…SILMSPFVPS (143 aa)). Disulfide bonds link Cys534/Cys561 and Cys549/Cys563. Residues 534 to 579 (CVFWDFSHLQWNDAGCHLVNETQDIVTCQCTHLTSFSILMSPFVPS) are GPS. Residues 568–576 (SFSILMSPF) form a stachel region. Residues 584–609 (VVKWITYVGLGISIGSLILCLIIEAL) traverse the membrane as a helical segment. Over 610 to 621 (FWKQIKKSQTSH) the chain is Cytoplasmic. A helical membrane pass occupies residues 622–646 (TRRICMVNIALSLLIADVWFIVGAT). Over 647-658 (VDTTVNPSGVCT) the chain is Extracellular. The cysteines at positions 657 and 733 are disulfide-linked. The chain crosses the membrane as a helical span at residues 659–684 (AAVFFTHFFYLSLFFWMLMLGILLAY). Residues 685–696 (RIILVFHHMAQH) lie on the Cytoplasmic side of the membrane. Residues 697–719 (LMMAVGFCLGYGCPLIISVITIA) form a helical membrane-spanning segment. Residues 720-742 (VTQPSNTYKRKDVCWLNWSNGSK) lie on the Extracellular side of the membrane. N-linked (GlcNAc...) asparagine glycosylation is found at Asn736 and Asn739. Residues 743 to 767 (PLLAFVVPALAIVAVNFVVVLLVLT) traverse the membrane as a helical segment. The Cytoplasmic portion of the chain corresponds to 768 to 784 (KLWRPTVGERLSRDDKA). Residues 785–813 (TIIRVGKSLLILTPLLGLTWGFGIGTIVD) form a helical membrane-spanning segment. The Extracellular segment spans residues 814-816 (SQN). Residues 817 to 842 (LAWHVIFALLNAFQGFFILCFGILLD) traverse the membrane as a helical segment. The Cytoplasmic portion of the chain corresponds to 843–910 (SKLRQLLFNK…IMLTQFVSNE (68 aa)).

It belongs to the G-protein coupled receptor 2 family. Adhesion G-protein coupled receptor (ADGR) subfamily. As to quaternary structure, heterodimer of 2 chains generated by proteolytic processing; the large extracellular N-terminal fragment and the membrane-bound C-terminal fragment predominantly remain associated and non-covalently linked. In terms of processing, autoproteolytically processed at the GPS region of the GAIN-B domain; this cleavage modulates receptor activity. Post-translationally, glycosylated. Glycosylation at Asn-389 is required for secretion or folding. As to expression, mainly expressed in the kidney. Up-regulated in lung adenocarcinomas and prostate cancers.

It is found in the cell membrane. Its subcellular location is the secreted. Its activity is regulated as follows. Forms a heterodimer of 2 chains generated by proteolytic processing that remain associated through non-covalent interactions mediated by the GAIN-B domain. In the inactivated receptor, the Stachel sequence (also named stalk) is embedded in the GAIN-B domain, where it adopts a beta-strand conformation. On activation, the Stachel moves into the 7 transmembrane region and adopts a twisted hook-shaped configuration that forms contacts within the receptor, leading to coupling of a G-alpha protein, which activates signaling. The cleaved GAIN-B and N-terminal domains can then dissociate from the rest of the receptor. Adhesion G-protein coupled receptor (aGPCR) for N-docosahexaenoylethanolamine (synaptamide), an omega-3 fatty acid lipid highly enriched in the brain. Ligand binding causes a conformation change that triggers signaling via guanine nucleotide-binding proteins (G proteins) and modulates the activity of downstream effectors, such as adenylate cyclase. ADGRF1 is coupled to G(s) G proteins and mediates activation of adenylate cyclase activity. Also able to couple to G(q), G(i) and G(12)/G(13) G proteins; additional evidence is however required to confirm this result in vivo. Involved in the development of neurons and cognitive function. In liver, involved in fat accumulation. This chain is Adhesion G-protein coupled receptor F1, found in Homo sapiens (Human).